A 364-amino-acid chain; its full sequence is Dihydroorotate dehydrogenase (quinone) (364 aa).

FMN is bound by residues 62-66 and Thr86; that span reads AGFDK. Lys66 provides a ligand contact to substrate. 111–115 provides a ligand contact to substrate; sequence NRMGF. Residues Asn142 and Asn175 each contribute to the FMN site. A substrate-binding site is contributed by Asn175. The active-site Nucleophile is the Ser178. Substrate is bound at residue Asn180. Positions 216 and 244 each coordinate FMN. Position 245 to 246 (245 to 246) interacts with substrate; that stretch reads NT. FMN is bound by residues Gly267, Gly296, and 317 to 318; that span reads YT.

It belongs to the dihydroorotate dehydrogenase family. Type 2 subfamily. Monomer. Requires FMN as cofactor.

Its subcellular location is the cell membrane. The catalysed reaction is (S)-dihydroorotate + a quinone = orotate + a quinol. It participates in pyrimidine metabolism; UMP biosynthesis via de novo pathway; orotate from (S)-dihydroorotate (quinone route): step 1/1. Functionally, catalyzes the conversion of dihydroorotate to orotate with quinone as electron acceptor. In Anaeromyxobacter sp. (strain K), this protein is Dihydroorotate dehydrogenase (quinone).